A 226-amino-acid chain; its full sequence is MSSRKRKATDTAGRHSRMDPNLSSDDSQNPGAVAAANREVLDAGREDIISSGTERQQARKEKQDLVQEFEEPRNKVLQENREKFSRIMTSSFSAMEVKIKDVLKTHCEERQKLCQDYSLQFTNLNRKLTSDAYKLKKHAETLSNMFMEQQKFIHESLTLQKNRMEEFKSLCEKYLEKLEVLRDSRGNSIAEELRRLIATLEIKLLMLHNQQKTAAPPQSLLDVLFS.

The disordered stretch occupies residues 1 to 66; sequence MSSRKRKATD…QARKEKQDLV (66 aa). The span at 8-18 shows a compositional bias: basic and acidic residues; it reads ATDTAGRHSRM. The span at 21-30 shows a compositional bias: polar residues; that stretch reads NLSSDDSQNP. Composition is skewed to basic and acidic residues over residues 39 to 48 and 56 to 66; these read EVLDAGREDI and QQARKEKQDLV. Residues 155–210 are a coiled coil; the sequence is ESLTLQKNRMEEFKSLCEKYLEKLEVLRDSRGNSIAEELRRLIATLEIKLLMLHNQ.

The protein belongs to the XLR/SYCP3 family. As to expression, expressed in lymphoid cells.

The polypeptide is X-linked lymphocyte-regulated protein 3C (Xlr3c) (Mus musculus (Mouse)).